Here is a 538-residue protein sequence, read N- to C-terminus: MPKILKFNEEARRALERGVDKVANAVKVTLGPKGRNVVIEKSWGSPTITNDGVSIAKEIELEDKFENLGAQLVKEVASKTNDVAGDGTTTATVLAQAMIKEGLKNVAAGANPILLKRGIDKAVEKAVEEIKKVSKKLSGREDIAHVAAISANSAEIGELIAEAMDKVGEDGVITVEDSKTLETYVEFTEGMQFDRGYISPYFVTDAEKMEVVLKEPFILITDRKLSAVKPLIPILEKVAQTGKPLLVIAEDVEGEVLTTLVLNKLKGTLQSCAVKAPGFGERRKAMLQDIAILTGGQVASEELGINLEDLTLEDLGRADLVRVKKDETIIIGGKGDPEAIKKRIAQIKAQIEETTSEYEKETLQERMAKLAGGVAVIKVGAATETELKEKKHRIEDALSATRAAVEEGIVPGGGVTLLRARKAVEKVIEELEGDEKIGAQIVYKALSAPIKQIAENAGYDGAVIIEKILSNDDPAYGFDALRGEYCNMFERGIIDPAKVTRSALQNAASIAGMLLTTEVLIVEKPEEKKETPSMPEEF.

Residues 29–32 (TLGP), 86–90 (DGTTT), Gly-413, 479–481 (DAL), and Asp-495 each bind ATP.

Belongs to the chaperonin (HSP60) family. In terms of assembly, forms a cylinder of 14 subunits composed of two heptameric rings stacked back-to-back. Interacts with the co-chaperonin GroES.

It localises to the cytoplasm. It catalyses the reaction ATP + H2O + a folded polypeptide = ADP + phosphate + an unfolded polypeptide.. In terms of biological role, together with its co-chaperonin GroES, plays an essential role in assisting protein folding. The GroEL-GroES system forms a nano-cage that allows encapsulation of the non-native substrate proteins and provides a physical environment optimized to promote and accelerate protein folding. In Thermotoga maritima (strain ATCC 43589 / DSM 3109 / JCM 10099 / NBRC 100826 / MSB8), this protein is Chaperonin GroEL.